We begin with the raw amino-acid sequence, 1100 residues long: DNA-directed RNA polymerase subunit beta (1100 aa).

The interval 1064 to 1100 is disordered; the sequence is YEEDKEVDLMADVNQRRTPSRPTYESMSVGDIDDDDD. Residues 1079–1089 are compositionally biased toward polar residues; the sequence is RRTPSRPTYES.

The protein belongs to the RNA polymerase beta chain family. In cyanobacteria the RNAP catalytic core is composed of 2 alpha, 1 beta, 1 beta', 1 gamma and 1 omega subunit. When a sigma factor is associated with the core the holoenzyme is formed, which can initiate transcription.

The catalysed reaction is RNA(n) + a ribonucleoside 5'-triphosphate = RNA(n+1) + diphosphate. Functionally, DNA-dependent RNA polymerase catalyzes the transcription of DNA into RNA using the four ribonucleoside triphosphates as substrates. This chain is DNA-directed RNA polymerase subunit beta, found in Synechococcus elongatus (strain ATCC 33912 / PCC 7942 / FACHB-805) (Anacystis nidulans R2).